Consider the following 203-residue polypeptide: dITP/XTP pyrophosphatase (203 aa).

Residue 9–14 coordinates substrate; it reads SSNAGK. Residues glutamate 42 and aspartate 72 each contribute to the Mg(2+) site. Catalysis depends on aspartate 72, which acts as the Proton acceptor. Residues serine 73, 161–164, lysine 184, and 189–190 each bind substrate; these read FGYD and HR.

Belongs to the HAM1 NTPase family. In terms of assembly, homodimer. Requires Mg(2+) as cofactor.

It catalyses the reaction XTP + H2O = XMP + diphosphate + H(+). The enzyme catalyses dITP + H2O = dIMP + diphosphate + H(+). It carries out the reaction ITP + H2O = IMP + diphosphate + H(+). Its function is as follows. Pyrophosphatase that catalyzes the hydrolysis of nucleoside triphosphates to their monophosphate derivatives, with a high preference for the non-canonical purine nucleotides XTP (xanthosine triphosphate), dITP (deoxyinosine triphosphate) and ITP. Seems to function as a house-cleaning enzyme that removes non-canonical purine nucleotides from the nucleotide pool, thus preventing their incorporation into DNA/RNA and avoiding chromosomal lesions. In Acidobacterium capsulatum (strain ATCC 51196 / DSM 11244 / BCRC 80197 / JCM 7670 / NBRC 15755 / NCIMB 13165 / 161), this protein is dITP/XTP pyrophosphatase.